The chain runs to 220 residues: ATP synthase subunit delta (220 aa).

Belongs to the ATPase delta chain family. As to quaternary structure, F-type ATPases have 2 components, F(1) - the catalytic core - and F(0) - the membrane proton channel. F(1) has five subunits: alpha(3), beta(3), gamma(1), delta(1), epsilon(1). F(0) has three main subunits: a(1), b(2) and c(10-14). The alpha and beta chains form an alternating ring which encloses part of the gamma chain. F(1) is attached to F(0) by a central stalk formed by the gamma and epsilon chains, while a peripheral stalk is formed by the delta and b chains.

The protein localises to the cell inner membrane. F(1)F(0) ATP synthase produces ATP from ADP in the presence of a proton or sodium gradient. F-type ATPases consist of two structural domains, F(1) containing the extramembraneous catalytic core and F(0) containing the membrane proton channel, linked together by a central stalk and a peripheral stalk. During catalysis, ATP synthesis in the catalytic domain of F(1) is coupled via a rotary mechanism of the central stalk subunits to proton translocation. Its function is as follows. This protein is part of the stalk that links CF(0) to CF(1). It either transmits conformational changes from CF(0) to CF(1) or is implicated in proton conduction. The chain is ATP synthase subunit delta from Gluconobacter oxydans (strain 621H) (Gluconobacter suboxydans).